The sequence spans 295 residues: Succinate dehydrogenase [ubiquinone] iron-sulfur subunit, mitochondrial (295 aa).

Residues E67 to M144 form the 2Fe-2S ferredoxin-type domain. [2Fe-2S] cluster contacts are provided by C106, C111, C114, and C126. Positions E185–Y215 constitute a 4Fe-4S ferredoxin-type domain. 3 residues coordinate [4Fe-4S] cluster: C195, C198, and C201. Residue C205 coordinates [3Fe-4S] cluster. W210 is a binding site for a ubiquinone. [3Fe-4S] cluster-binding residues include C252 and C258. Residue C262 coordinates [4Fe-4S] cluster.

It belongs to the succinate dehydrogenase/fumarate reductase iron-sulfur protein family. As to quaternary structure, component of complex II composed of four subunits: a flavoprotein (FP), an iron-sulfur protein (IP), and a cytochrome b composed of a large and a small subunit. The cofactor is [2Fe-2S] cluster. [3Fe-4S] cluster is required as a cofactor. It depends on [4Fe-4S] cluster as a cofactor.

The protein localises to the mitochondrion inner membrane. It catalyses the reaction a quinone + succinate = fumarate + a quinol. It functions in the pathway carbohydrate metabolism; tricarboxylic acid cycle; fumarate from succinate (eukaryal route): step 1/1. Functionally, iron-sulfur protein (IP) subunit of succinate dehydrogenase (SDH) that is involved in complex II of the mitochondrial electron transport chain and is responsible for transferring electrons from succinate to ubiquinone (coenzyme Q). This Mycosarcoma maydis (Corn smut fungus) protein is Succinate dehydrogenase [ubiquinone] iron-sulfur subunit, mitochondrial (SDH2).